Consider the following 41-residue polypeptide: MQVLSSLKTAKQRHRDCQIVRRRGKVYVICKSNPRFKSRQR.

It belongs to the bacterial ribosomal protein bL36 family.

In Neisseria gonorrhoeae (strain ATCC 700825 / FA 1090), this protein is Large ribosomal subunit protein bL36.